A 385-amino-acid chain; its full sequence is tRNA (guanine-N(7)-)-methyltransferase non-catalytic subunit wuho (385 aa).

3 WD repeats span residues 68 to 108 (KVEV…AKLL), 155 to 194 (GHLSIVYDILWTPDQKHIITSDRDDKIRVTNYPATFDIHS), and 198 to 236 (GHKEFVSGLALLTEEHLLSVSGDKTLRLWNYLSGMELLH).

The protein belongs to the WD repeat TRM82 family. Forms a heterodimer with the catalytic subunit Mettl1. Interacts with mei-P26 and weakly interacts with bgcn; required for the function or formation of the mei-P26-bgcn-bam-sxl complex. Interacts with nanos; may be involved in mei-P26-dependent derepression of the BMP signaling pathway. Interacts with Myc; the interaction may be mediated by mei-P26 and may be involved in the regulation of ribosome biogenesis. In testis, it is present at high level in hub cells, a niche for germline stem cells of testis. Ubiquitously expressed in all testicular cells throughout spermatogenesis. Ubiquitously expressed in all germline and somatic cells of the ovary.

Its subcellular location is the nucleus. The protein localises to the cytoplasm. The protein operates within tRNA modification; N(7)-methylguanine-tRNA biosynthesis. Its function is as follows. Required for the Mettl1-dependent formation of N(7)-methylguanine at position 46 (m7G46) in tRNA. In the Mettl1-wuho methyltransferase complex, it is required to stabilize and induce conformational changes of the catalytic subunit. Required for binding of nanos mRNA and repression of translation by the mei-P26-bgcn-bam-sxl complex. May cooperate with mei-P26 and nanos to derepress the BMP signaling pathway. May cooperate with mei-P26 to suppress expression of a subset of microRNAs. May cooperate with mei-P26 to regulate bam expression levels in germline cells during gametogenesis. Required to promote mitosis to meiosis transition during gametogenesis. May regulate germline cell division in part by regulating ribosome biogenesis. The polypeptide is tRNA (guanine-N(7)-)-methyltransferase non-catalytic subunit wuho (Drosophila grimshawi (Hawaiian fruit fly)).